A 374-amino-acid polypeptide reads, in one-letter code: MKYLLPSAAAGLLLLAAQPTMAANTGGYATTDGGDVAGAVKKTARSMQDIIDIIEAAKLDSNGKKVKGGAYPLVITYNGNEDALIKAAENDICGQWKKDARGVEIKEFTKGITIIGTNGSSANFGIWLTKSSDIVIRNMRFGYMPGGAQDGDAIRIDNTPNVWIDHNEIFAKNFECAGTKDGDTTFESAIDIKKASTNVTVSYNYIHGIKKVGLSGFSSSDTGRDLTYHHNIYDDVNARLPLQRGGQVHAYNNLYTGITSSGLNVRQKGIALIERNWFENAKNPVTSRYDGSNFGTWELRNNNVMSPADFAKYNITWDKDTKPYVNAEDWKSTGTFASVPYSYSPVSAQCVKDKLANYAGVNKNLAVLTAANCN.

A signal peptide spans 1 to 22 (MKYLLPSAAAGLLLLAAQPTMA). Cys93 and Cys176 are disulfide-bonded. Ca(2+) contacts are provided by Asp150, Asp152, Glu187, and Asp191. Arg239 is a catalytic residue. A disulfide bond links Cys350 and Cys373.

It belongs to the polysaccharide lyase 1 family. PLADES subfamily. It depends on Ca(2+) as a cofactor.

The protein resides in the secreted. The enzyme catalyses Eliminative cleavage of (1-&gt;4)-alpha-D-galacturonan to give oligosaccharides with 4-deoxy-alpha-D-galact-4-enuronosyl groups at their non-reducing ends.. It participates in glycan metabolism; pectin degradation; 2-dehydro-3-deoxy-D-gluconate from pectin: step 2/5. Involved in maceration and soft-rotting of plant tissue. The polypeptide is Pectate lyase 3 (pel3) (Pectobacterium carotovorum subsp. carotovorum (Erwinia carotovora subsp. carotovora)).